The following is a 98-amino-acid chain: Conotoxin Di19A (98 aa).

Positions 1–19 are cleaved as a signal peptide; the sequence is MSTLGILLPIALLLPLANP. A propeptide spanning residues 20–49 is cleaved from the precursor; the sequence is AENGDGQAMPRTRNLRSLSFGRTLRRLEKR. Pro-53 bears the 4-hydroxyproline mark. Glu-63 carries the post-translational modification 4-carboxyglutamate. A 4-hydroxyproline mark is found at Pro-68, Pro-93, and Pro-97.

In terms of processing, contains 5 disulfide bonds. In terms of tissue distribution, expressed by the venom duct.

It is found in the secreted. In terms of biological role, injection of the synthetic peptide causes a hyperexcitable phenotype in mice greater than three weeks of age at lower doses, and lethargy at higher doses. The polypeptide is Conotoxin Di19A (Conus distans (Distant cone)).